The following is a 214-amino-acid chain: Large ribosomal subunit protein uL16 (214 aa).

Arg-32 bears the Citrulline mark. Lys-175 participates in a covalent cross-link: Glycyl lysine isopeptide (Lys-Gly) (interchain with G-Cter in SUMO2). Residue Lys-188 forms a Glycyl lysine isopeptide (Lys-Gly) (interchain with G-Cter in ubiquitin) linkage.

This sequence belongs to the universal ribosomal protein uL16 family. In terms of assembly, component of the large ribosomal subunit. Mature ribosomes consist of a small (40S) and a large (60S) subunit. The 40S subunit contains about 33 different proteins and 1 molecule of RNA (18S). The 60S subunit contains about 49 different proteins and 3 molecules of RNA (28S, 5.8S and 5S). In terms of processing, citrullinated by PADI4. Post-translationally, ufmylated by UFL1.

The protein localises to the cytoplasm. Its function is as follows. Component of the large ribosomal subunit. Plays a role in the formation of actively translating ribosomes. May play a role in the embryonic brain development. The polypeptide is Large ribosomal subunit protein uL16 (Bos taurus (Bovine)).